The following is a 340-amino-acid chain: MFWISLVCLSVSHKMIGMCYLLVAILCGFLGYIYSLFIRLELSIIGCGVLFGDYQYYNVLVTTHGLVMVFAFIMPVMMGGLVNYFVPVLSGFPDMVFPRLNNMSFWMFMGGFGALVSGLLTEEGMGIGWTMYPTLICVDFHSSLACDFTVFAVHLLGVSSILNSINLLGTLFCCRRKFFSFLNWTLFIWGSLITALLLIITLPVLAGGVTLVLCDRNFNTSFYDVVGGGDLLLFQHLFWFFGHPEVYIIIIPVFGLISTMVEVLGFRCVFSSVAMIYSMILIAILGFFVWAHHMFVVGMDVDTRAYFGSVTVLIGLPTCIKLFNWTYSFLYTDFIIAFEA.

A helical membrane pass occupies residues 18-38 (MCYLLVAILCGFLGYIYSLFI). E41 and G46 together coordinate Ca(2+). Residues 42–62 (LSIIGCGVLFGDYQYYNVLVT) traverse the membrane as a helical segment. Fe(II)-heme a is bound at residue H64. 7 helical membrane-spanning segments follow: residues 66–86 (LVMV…NYFV), 100–120 (LNNM…SGLL), 148–168 (FTVF…INLL), 186–206 (LFIW…PVLA), 237–257 (LFWF…FGLI), 279–299 (MILI…VVGM), and 305–325 (AYFG…LFNW). H243 contacts Cu cation. Positions 243-247 (HPEVY) form a cross-link, 1'-histidyl-3'-tyrosine (His-Tyr). Y247 provides a ligand contact to O2. Cu cation contacts are provided by H292 and H293.

The protein belongs to the heme-copper respiratory oxidase family. Component of the cytochrome c oxidase (complex IV, CIV), a multisubunit enzyme composed of a catalytic core of 3 subunits and several supernumerary subunits. The complex exists as a monomer or a dimer and forms supercomplexes (SCs) in the inner mitochondrial membrane with ubiquinol-cytochrome c oxidoreductase (cytochrome b-c1 complex, complex III, CIII). It depends on heme as a cofactor. Requires Cu cation as cofactor.

It is found in the mitochondrion inner membrane. It catalyses the reaction 4 Fe(II)-[cytochrome c] + O2 + 8 H(+)(in) = 4 Fe(III)-[cytochrome c] + 2 H2O + 4 H(+)(out). Its pathway is energy metabolism; oxidative phosphorylation. Functionally, component of the cytochrome c oxidase, the last enzyme in the mitochondrial electron transport chain which drives oxidative phosphorylation. The respiratory chain contains 3 multisubunit complexes succinate dehydrogenase (complex II, CII), ubiquinol-cytochrome c oxidoreductase (cytochrome b-c1 complex, complex III, CIII) and cytochrome c oxidase (complex IV, CIV), that cooperate to transfer electrons derived from NADH and succinate to molecular oxygen, creating an electrochemical gradient over the inner membrane that drives transmembrane transport and the ATP synthase. Cytochrome c oxidase is the component of the respiratory chain that catalyzes the reduction of oxygen to water. Electrons originating from reduced cytochrome c in the intermembrane space (IMS) are transferred via the dinuclear copper A center (CU(A)) of subunit 2 and heme A of subunit 1 to the active site in subunit 1, a binuclear center (BNC) formed by heme A3 and copper B (CU(B)). The BNC reduces molecular oxygen to 2 water molecules using 4 electrons from cytochrome c in the IMS and 4 protons from the mitochondrial matrix. The protein is Cytochrome c oxidase subunit 1 (COI) of Strigomonas oncopelti (Parasitic flagellate).